Consider the following 51-residue polypeptide: Ovomucoid (51 aa).

Residues V3–C51 enclose the Kazal-like domain. 3 disulfide bridges follow: C5/C35, C13/C32, and C21/C51. The N-linked (GlcNAc...) asparagine glycan is linked to N42.

The protein resides in the secreted. The sequence is that of Ovomucoid from Nothoprocta cinerascens (Brushland tinamou).